The primary structure comprises 129 residues: MNASISLLCLALLLISPFCLGYSDEERESDSLRVAEIIRTSNDAESKINRTQELLDIFRRLTPTLSPEQREKIERSIQEHTDEILIDGVPSQGGRKTKYVGKILSPVAQGLAVGFFEELGGSLSRLFTG.

Positions 1 to 21 (MNASISLLCLALLLISPFCLG) are cleaved as a signal peptide.

This sequence belongs to the Turandot family.

The protein resides in the secreted. A humoral factor that may play a role in stress tolerance. The sequence is that of Protein Turandot C from Drosophila melanogaster (Fruit fly).